The chain runs to 242 residues: 1-(5-phosphoribosyl)-5-[(5-phosphoribosylamino)methylideneamino] imidazole-4-carboxamide isomerase (242 aa).

D8 acts as the Proton acceptor in catalysis. Catalysis depends on D129, which acts as the Proton donor.

Belongs to the HisA/HisF family.

The protein resides in the cytoplasm. It carries out the reaction 1-(5-phospho-beta-D-ribosyl)-5-[(5-phospho-beta-D-ribosylamino)methylideneamino]imidazole-4-carboxamide = 5-[(5-phospho-1-deoxy-D-ribulos-1-ylimino)methylamino]-1-(5-phospho-beta-D-ribosyl)imidazole-4-carboxamide. It participates in amino-acid biosynthesis; L-histidine biosynthesis; L-histidine from 5-phospho-alpha-D-ribose 1-diphosphate: step 4/9. The sequence is that of 1-(5-phosphoribosyl)-5-[(5-phosphoribosylamino)methylideneamino] imidazole-4-carboxamide isomerase from Dictyoglomus turgidum (strain DSM 6724 / Z-1310).